We begin with the raw amino-acid sequence, 410 residues long: Argininosuccinate synthase (410 aa).

Residues 10–18 and Ala37 contribute to the ATP site; that span reads AYSGGLDTS. L-citrulline is bound by residues Tyr90 and Ser95. Gly120 contributes to the ATP binding site. 3 residues coordinate L-aspartate: Thr122, Asn126, and Asp127. Asn126 is a binding site for L-citrulline. The L-citrulline site is built by Arg130, Ser182, Ser191, Glu267, and Tyr279.

Belongs to the argininosuccinate synthase family. Type 1 subfamily. As to quaternary structure, homotetramer.

It localises to the cytoplasm. The enzyme catalyses L-citrulline + L-aspartate + ATP = 2-(N(omega)-L-arginino)succinate + AMP + diphosphate + H(+). It functions in the pathway amino-acid biosynthesis; L-arginine biosynthesis; L-arginine from L-ornithine and carbamoyl phosphate: step 2/3. This chain is Argininosuccinate synthase, found in Polynucleobacter necessarius subsp. necessarius (strain STIR1).